A 515-amino-acid chain; its full sequence is Tripartite motif-containing protein 5 (515 aa).

At Ala-2 the chain carries N-acetylalanine. The RING-type zinc-finger motif lies at 15 to 60; the sequence is CPICLELLTEPLSLPCGHSFCQACITANHKESMLYKEEERSCPVCR. Ser-87 is subject to Phosphoserine. Residues 92–133 form a B box-type zinc finger; it reads QKVDHCARHGEKLLLFCQEDSKVICWLCERSQEHRGHHTFLM. Zn(2+) is bound by residues Cys-97, His-100, Cys-119, and His-125. Residues 137 to 225 are a coiled coil; sequence AQEYHVKLQT…LTKSETEMVQ (89 aa). Positions 187 to 200 are required for interaction with GABARAP and for autophagy; that stretch reads FEQLREILDWEESN. One can recognise a B30.2/SPRY domain in the interval 283–515; that stretch reads LKGMLDMFRE…VPMTLCSPSS (233 aa).

Belongs to the TRIM/RBCC family. In terms of assembly, can form homodimers and homotrimers. In addition to lower-order dimerization, also exhibits a higher-order multimerization and both low- and high-order multimerizations are essential for its restriction activity. Interacts with BTBD1 and BTBD2. Interacts with PSMC4, PSMC5, PSMD7 and HSPA8/HSC70. Interacts (via B30.2/SPRY domain) with HSPA1A/B. Interacts with PSMC2, MAP3K7/TAK1, TAB2 and TAB3. Interacts with SQSTM1. Interacts with TRIM6 and TRIM34. Interacts with ULK1 (phosphorylated form), GABARAP, GABARAPL1, GABARAPL2, MAP1LC3A, MAP1LC3C and BECN1. Degraded in a proteasome-independent fashion in the absence of viral infection but in a proteasome-dependent fashion following exposure to restriction sensitive virus. In terms of processing, autoubiquitinated in a RING finger- and UBE2D2-dependent manner. Monoubiquitinated by TRIM21. Deubiquitinated by Yersinia YopJ. Ubiquitination may not lead to proteasomal degradation.

It is found in the cytoplasm. It localises to the nucleus. It catalyses the reaction S-ubiquitinyl-[E2 ubiquitin-conjugating enzyme]-L-cysteine + [acceptor protein]-L-lysine = [E2 ubiquitin-conjugating enzyme]-L-cysteine + N(6)-ubiquitinyl-[acceptor protein]-L-lysine.. It functions in the pathway protein modification; protein ubiquitination. Its function is as follows. Capsid-specific restriction factor that prevents infection from non-host-adapted retroviruses. Blocks viral replication early in the life cycle, after viral entry but before reverse transcription. In addition to acting as a capsid-specific restriction factor, also acts as a pattern recognition receptor that activates innate immune signaling in response to the retroviral capsid lattice. Binding to the viral capsid triggers its E3 ubiquitin ligase activity, and in concert with the heterodimeric ubiquitin conjugating enzyme complex UBE2V1-UBE2N (also known as UBC13-UEV1A complex) generates 'Lys-63'-linked polyubiquitin chains, which in turn are catalysts in the autophosphorylation of the MAP3K7/TAK1 complex (includes TAK1, TAB2, and TAB3). Activation of the MAP3K7/TAK1 complex by autophosphorylation results in the induction and expression of NF-kappa-B and MAPK-responsive inflammatory genes, thereby leading to an innate immune response in the infected cell. Plays a role in regulating autophagy through activation of autophagy regulator BECN1 by causing its dissociation from its inhibitors BCL2 and TAB2. This Chlorocebus aethiops (Green monkey) protein is Tripartite motif-containing protein 5 (TRIM5).